The sequence spans 83 residues: Small ribosomal subunit protein eS27 (83 aa).

Residues 37 to 59 (CSGCFKISTVFSHATTVVVCVGC) form a C4-type zinc finger.

The protein belongs to the eukaryotic ribosomal protein eS27 family. The cofactor is Zn(2+).

The polypeptide is Small ribosomal subunit protein eS27 (rps-27) (Caenorhabditis elegans).